The sequence spans 327 residues: Tetraacyldisaccharide 4'-kinase (327 aa).

52–59 contributes to the ATP binding site; sequence TLGGAGKT.

Belongs to the LpxK family.

It carries out the reaction a lipid A disaccharide + ATP = a lipid IVA + ADP + H(+). Its pathway is glycolipid biosynthesis; lipid IV(A) biosynthesis; lipid IV(A) from (3R)-3-hydroxytetradecanoyl-[acyl-carrier-protein] and UDP-N-acetyl-alpha-D-glucosamine: step 6/6. In terms of biological role, transfers the gamma-phosphate of ATP to the 4'-position of a tetraacyldisaccharide 1-phosphate intermediate (termed DS-1-P) to form tetraacyldisaccharide 1,4'-bis-phosphate (lipid IVA). The polypeptide is Tetraacyldisaccharide 4'-kinase (Methylorubrum extorquens (strain CM4 / NCIMB 13688) (Methylobacterium extorquens)).